Reading from the N-terminus, the 166-residue chain is Regulatory protein RecX (166 aa).

The protein belongs to the RecX family.

The protein localises to the cytoplasm. Functionally, modulates RecA activity. This Escherichia coli O7:K1 (strain IAI39 / ExPEC) protein is Regulatory protein RecX.